The following is a 221-amino-acid chain: Carbonic anhydrase (221 aa).

The Zn(2+) site is built by cysteine 38, aspartate 40, histidine 99, and cysteine 102.

It belongs to the beta-class carbonic anhydrase family. It depends on Zn(2+) as a cofactor.

It catalyses the reaction hydrogencarbonate + H(+) = CO2 + H2O. The sequence is that of Carbonic anhydrase (cynT) from Helicobacter pylori (strain J99 / ATCC 700824) (Campylobacter pylori J99).